The following is a 205-amino-acid chain: Meiotic nuclear division protein 1 homolog (205 aa).

S2 carries the post-translational modification N-acetylserine. Positions 84 to 173 (HKLEVLESQL…EAANRWTDNI (90 aa)) form a coiled coil.

This sequence belongs to the MND1 family. In terms of assembly, heterodimer with PSMC3IP/HOP2. MND1-PSMC3IP interacts with DMC1 and RAD51 and binds preferentially to dsDNA.

It is found in the nucleus. Functionally, required for proper homologous chromosome pairing and efficient cross-over and intragenic recombination during meiosis. Stimulates both DMC1- and RAD51-mediated homologous strand assimilation, which is required for the resolution of meiotic double-strand breaks. This chain is Meiotic nuclear division protein 1 homolog, found in Homo sapiens (Human).